Consider the following 505-residue polypeptide: ATP synthase subunit alpha, cyanelle (505 aa).

Position 170–177 (170–177) interacts with ATP; the sequence is GDRQTGKT.

This sequence belongs to the ATPase alpha/beta chains family. In terms of assembly, F-type ATPases have 2 components, CF(1) - the catalytic core - and CF(0) - the membrane proton channel. CF(1) has five subunits: alpha(3), beta(3), gamma(1), delta(1), epsilon(1). CF(0) has four main subunits: a, b, b' and c.

The protein localises to the plastid. Its subcellular location is the cyanelle thylakoid membrane. It carries out the reaction ATP + H2O + 4 H(+)(in) = ADP + phosphate + 5 H(+)(out). Its function is as follows. Produces ATP from ADP in the presence of a proton gradient across the membrane. The alpha chain is a regulatory subunit. The protein is ATP synthase subunit alpha, cyanelle of Cyanophora paradoxa.